We begin with the raw amino-acid sequence, 221 residues long: Probable chemoreceptor glutamine deamidase CheD 1 (221 aa).

This sequence belongs to the CheD family.

It carries out the reaction L-glutaminyl-[protein] + H2O = L-glutamyl-[protein] + NH4(+). Functionally, probably deamidates glutamine residues to glutamate on methyl-accepting chemotaxis receptors (MCPs), playing an important role in chemotaxis. The protein is Probable chemoreceptor glutamine deamidase CheD 1 of Methanosarcina mazei (strain ATCC BAA-159 / DSM 3647 / Goe1 / Go1 / JCM 11833 / OCM 88) (Methanosarcina frisia).